The sequence spans 227 residues: MTAIAPVITIDGPSGAGKGTLCKAMAEALQWHLLDSGAIYRVLALAALHHHVDVASEDALVPLASHLDVRFVSTNGNLEVILEGEDVSGEIRTQEVANAASQVAAFPRVREALLRRQRAFRELPGLIADGRDMGTVVFPDAPVKIFLDASSEERAHRRMLQLQEKGFSVNFERLLAEIKERDDRDRNRAVAPLVPASDALVLDSTTLSIEQVIEKALQYARQKLALA.

ATP is bound at residue G12–T20.

It belongs to the cytidylate kinase family. Type 1 subfamily.

It localises to the cytoplasm. The catalysed reaction is CMP + ATP = CDP + ADP. It carries out the reaction dCMP + ATP = dCDP + ADP. In Shigella sonnei (strain Ss046), this protein is Cytidylate kinase.